Consider the following 197-residue polypeptide: Phosphoheptose isomerase (197 aa).

The 163-residue stretch at 34–196 (MVHCLLSGNK…DHTLFPQDEQ (163 aa)) folds into the SIS domain. Position 49 to 51 (49 to 51 (NGG)) interacts with substrate. Residues H58 and E62 each coordinate Zn(2+). Substrate is bound by residues E62, 91 to 92 (ND), 117 to 119 (STS), S122, and Q172. Positions 172 and 180 each coordinate Zn(2+).

The protein belongs to the SIS family. GmhA subfamily. In terms of assembly, homotetramer. It depends on Zn(2+) as a cofactor.

The protein resides in the cytoplasm. It catalyses the reaction 2 D-sedoheptulose 7-phosphate = D-glycero-alpha-D-manno-heptose 7-phosphate + D-glycero-beta-D-manno-heptose 7-phosphate. It participates in carbohydrate biosynthesis; D-glycero-D-manno-heptose 7-phosphate biosynthesis; D-glycero-alpha-D-manno-heptose 7-phosphate and D-glycero-beta-D-manno-heptose 7-phosphate from sedoheptulose 7-phosphate: step 1/1. Its function is as follows. Catalyzes the isomerization of sedoheptulose 7-phosphate in D-glycero-D-manno-heptose 7-phosphate. The chain is Phosphoheptose isomerase from Shewanella halifaxensis (strain HAW-EB4).